A 184-amino-acid polypeptide reads, in one-letter code: Protein PLANT CADMIUM RESISTANCE 4 (184 aa).

Polar residues predominate over residues 1 to 10; that stretch reads MGRPGSQPNE. The disordered stretch occupies residues 1-21; it reads MGRPGSQPNEAQPPPVQVQPT. Residues 96–116 form a helical membrane-spanning segment; sequence GGLLYGMIFFIGVPFVYSCMF.

This sequence belongs to the cornifelin family.

The protein localises to the membrane. May be involved in heavy metals transport. This chain is Protein PLANT CADMIUM RESISTANCE 4 (PCR4), found in Arabidopsis thaliana (Mouse-ear cress).